Reading from the N-terminus, the 643-residue chain is Replication protein E1 (643 aa).

Positions 86 to 88 (KRK) match the Nuclear localization signal motif. A Nuclear export signal motif is present at residues 109–118 (LSPRLQEISL). A Phosphoserine; by host modification is found at S110. Polar residues predominate over residues 152–175 (NTNAENGGSVHSTQSSGGDSSDNA). The segment at 152–178 (NTNAENGGSVHSTQSSGGDSSDNAENV) is disordered. Residues 179 to 345 (DPHCSITELK…LTIIQHGIDD (167 aa)) form a DNA-binding region region. One can recognise an SF3 helicase domain in the interval 444–594 (VEFISFLRAL…FPFDKNGNPV (151 aa)). ATP is bound at residue 470–477 (GPANTGKS). A Glycyl lysine isopeptide (Lys-Gly) (interchain with G-Cter in SUMO) cross-link involves residue K551.

The protein belongs to the papillomaviridae E1 protein family. Can form hexamers. Interacts with E2 protein; this interaction increases E1 DNA binding specificity. Interacts with host DNA polymerase subunit POLA2. Interacts with host single stranded DNA-binding protein RPA1. Interacts with host TOP1; this interaction stimulates the enzymatic activity of TOP1. In terms of processing, phosphorylated. Post-translationally, sumoylated.

It localises to the host nucleus. It catalyses the reaction Couples ATP hydrolysis with the unwinding of duplex DNA by translocating in the 3'-5' direction.. It carries out the reaction ATP + H2O = ADP + phosphate + H(+). Its function is as follows. ATP-dependent DNA 3'-5' helicase required for initiation of viral DNA replication. It forms a complex with the viral E2 protein. The E1-E2 complex binds to the replication origin which contains binding sites for both proteins. During the initial step, a dimer of E1 interacts with a dimer of protein E2 leading to a complex that binds the viral origin of replication with high specificity. Then, a second dimer of E1 displaces the E2 dimer in an ATP-dependent manner to form the E1 tetramer. Following this, two E1 monomers are added to each half of the site, which results in the formation of two E1 trimers on the viral ori. Subsequently, two hexamers will be created. The double hexamer acts as a bi-directional helicase machinery and unwinds the viral DNA and then recruits the host DNA polymerase to start replication. This Human papillomavirus 45 protein is Replication protein E1.